The sequence spans 345 residues: Dihydroorotate dehydrogenase (quinone) (345 aa).

Residues 65–69 (AGLDK) and Thr-89 each bind FMN. Lys-69 contacts substrate. 114 to 118 (NRMGF) contacts substrate. FMN contacts are provided by Asn-142 and Asn-175. Asn-175 lines the substrate pocket. The active-site Nucleophile is Ser-178. Asn-180 serves as a coordination point for substrate. Lys-220 and Thr-248 together coordinate FMN. Residue 249–250 (NT) participates in substrate binding. FMN-binding positions include Gly-271, Gly-300, and 321–322 (YT).

This sequence belongs to the dihydroorotate dehydrogenase family. Type 2 subfamily. In terms of assembly, monomer. FMN is required as a cofactor.

It is found in the cell membrane. It carries out the reaction (S)-dihydroorotate + a quinone = orotate + a quinol. It functions in the pathway pyrimidine metabolism; UMP biosynthesis via de novo pathway; orotate from (S)-dihydroorotate (quinone route): step 1/1. Its function is as follows. Catalyzes the conversion of dihydroorotate to orotate with quinone as electron acceptor. In Burkholderia lata (strain ATCC 17760 / DSM 23089 / LMG 22485 / NCIMB 9086 / R18194 / 383), this protein is Dihydroorotate dehydrogenase (quinone).